The following is a 2351-amino-acid chain: Protein FAM186A (2351 aa).

Residues 296 to 340 (EAEKELSLKIIRDLSNENEMLQQKLQDAEEKCEQLIRSKIVIEQL) adopt a coiled-coil conformation. 8 disordered regions span residues 412 to 460 (ERTP…SWKR), 470 to 489 (ETSG…SEAK), 505 to 538 (EMKS…GKSG), 593 to 667 (QFDD…SEQS), 809 to 838 (STVQ…SGMS), 868 to 976 (LQMK…RGLE), 1805 to 1837 (GGQS…PGQP), and 1888 to 1907 (FQPP…STPG). Positions 433–446 (DSTKDNVSLKKGDF) are enriched in basic and acidic residues. Residues 472 to 484 (SGPNLSDNKSGQK) are compositionally biased toward polar residues. Positions 506–520 (MKSFSEDKSKSPTEA) are enriched in basic and acidic residues. The span at 527–538 (LTETKSQGGKSG) shows a compositional bias: polar residues. Basic residues predominate over residues 603–612 (GKIKGKKHHI). Basic and acidic residues-rich tracts occupy residues 619 to 632 (SKEE…ELTK) and 812 to 823 (QKDHKEKEKQRQ). A coiled-coil region spans residues 812–860 (QKDHKEKEKQRQEQYLQEGQEQMSGMSLKQQLLGERNLLKEHYEKISEN). Residues 824 to 838 (EQYLQEGQEQMSGMS) are compositionally biased toward polar residues. Composition is skewed to basic and acidic residues over residues 901–912 (AEQEEKQKQRGQ), 939–955 (LEKE…EAKH), and 964–976 (KGKE…RGLE). Over residues 1816 to 1835 (PQAPPSPGQLPISRAPPTPG) the composition is skewed to pro residues. The segment covering 1894–1907 (AEQSPYLQAPSTPG) has biased composition (polar residues).

This sequence belongs to the FAM186 family.

The sequence is that of Protein FAM186A (FAM186A) from Homo sapiens (Human).